Here is a 546-residue protein sequence, read N- to C-terminus: Thermolysin (546 aa).

The first 25 residues, 1–25 (MDKRAMLGAIGLAFGLMAWPFGASA), serve as a signal peptide directing secretion. The propeptide at 26 to 228 (KEKSMVWNEQ…EAKPGGGQPV (203 aa)) is activation peptide. Ca(2+) contacts are provided by D287, D289, Q291, and D368. H372 contacts Zn(2+). The active site involves E373. Residues H376 and E396 each coordinate Zn(2+). N413, D415, E417, E420, Y423, T424, I427, and D430 together coordinate Ca(2+). H461 serves as the catalytic Proton donor.

Belongs to the peptidase M4 family. The cofactor is Ca(2+). Requires Zn(2+) as cofactor.

It is found in the secreted. It catalyses the reaction Preferential cleavage: Xaa-|-Leu &gt; Xaa-|-Phe.. Functionally, extracellular zinc metalloprotease. Has collagenase activity. The polypeptide is Thermolysin (npr) (Bacillus sp. (strain EA1)).